The primary structure comprises 1145 residues: Protein sumv-2 (1145 aa).

The segment covering 1–13 (MKPGRKSLPKKNR) has biased composition (basic residues). 5 disordered regions span residues 1 to 310 (MKPG…APPA), 429 to 464 (QSRT…QKAR), 999 to 1025 (HSAS…AGSE), 1040 to 1059 (QIAA…PRTE), and 1073 to 1145 (ITTG…ISLI). The segment covering 14–34 (ASNITEKMPTTSTEAQSSSSK) has biased composition (polar residues). 2 stretches are compositionally biased toward basic and acidic residues: residues 73 to 104 (KTTE…EPRK) and 216 to 225 (VPEKKPKIED). The segment covering 226-248 (APTTSSPKKSTPTSAPPTRASAR) has biased composition (low complexity). Over residues 455-464 (GDEKRQQKAR) the composition is skewed to basic and acidic residues. Residues 999-1013 (HSASSSAAPSPVGAS) show a composition bias toward low complexity. The segment covering 1091-1102 (VIERGDFRDHRP) has biased composition (basic and acidic residues). Residues 1121-1136 (QQPPLPSPAPPPPRGP) show a composition bias toward pro residues.

In terms of biological role, influences the activity of genes involved in vulval development. This chain is Protein sumv-2, found in Caenorhabditis elegans.